Consider the following 263-residue polypeptide: Oxidoreductase UcpA (263 aa).

Residue 10–32 (LITGASQGIGEGIARVFARHGAN) participates in NAD(+) binding. Position 141 (Ser141) interacts with substrate. Tyr155 acts as the Proton acceptor in catalysis.

This sequence belongs to the short-chain dehydrogenases/reductases (SDR) family.

In Salmonella typhi, this protein is Oxidoreductase UcpA (ucpA).